A 428-amino-acid polypeptide reads, in one-letter code: uncharacterized protein (428 aa).

The tract at residues 1 to 49 (MRTQTFPPSSSSSRTTHPKKNRHSSNSSSMALVTPAKSSTGAAPKQSSQ) is disordered. Polar residues predominate over residues 24 to 49 (SSNSSSMALVTPAKSSTGAAPKQSSQ).

This is an uncharacterized protein from Caenorhabditis elegans.